The following is a 379-amino-acid chain: Pectin lyase B (379 aa).

Residues Met-1–Ala-19 form the signal peptide. 2 cysteine pairs are disulfide-bonded: Cys-82/Cys-101 and Cys-91/Cys-225. Residue Asn-128 is glycosylated (N-linked (GlcNAc...) asparagine). Residue Arg-255 is part of the active site. Cys-322 and Cys-330 are disulfide-bonded.

Belongs to the polysaccharide lyase 1 family.

It is found in the secreted. The catalysed reaction is Eliminative cleavage of (1-&gt;4)-alpha-D-galacturonan methyl ester to give oligosaccharides with 4-deoxy-6-O-methyl-alpha-D-galact-4-enuronosyl groups at their non-reducing ends.. Functionally, pectinolytic enzymes consist of four classes of enzymes: pectin lyase, polygalacturonase, pectin methylesterase and rhamnogalacturonase. Among pectinolytic enzymes, pectin lyase is the most important in depolymerization of pectin, since it cleaves internal glycosidic bonds of highly methylated pectins. In Emericella nidulans (strain FGSC A4 / ATCC 38163 / CBS 112.46 / NRRL 194 / M139) (Aspergillus nidulans), this protein is Pectin lyase B (pelB).